The primary structure comprises 454 residues: Aquaporin-7 (454 aa).

Residues 1–71 are Cytoplasmic-facing; it reads MNINEPRDGG…LHLHNKTRNH (71 aa). A helical membrane pass occupies residues 72–92; sequence FVATVAEFAGTTLFLFFAFSG. The Extracellular portion of the chain corresponds to 93-115; sequence TQVALLATPANDSNVVGTPSNPA. A glycan (N-linked (GlcNAc...) asparagine) is linked at asparagine 103. A helical membrane pass occupies residues 116-136; that stretch reads QLLYVSLCFGFSLAVNAWVFF. Residues 137–163 are Cytoplasmic-facing; that stretch reads RISGGLFNPAVTMGMCIVGALPYFRGL. The NPA 1 motif lies at 144 to 146; sequence NPA. The chain crosses the membrane as a helical span at residues 164 to 184; the sequence is LLIFAQIIGGIAAAAIVSALF. The Extracellular portion of the chain corresponds to 185–202; the sequence is PGPITFRTSLGGGTSIVQ. The helical transmembrane segment at 203–223 threads the bilayer; sequence GLFIEMFLTAELVFTIFMLAA. At 224–229 the chain is on the cytoplasmic side; sequence EKHKGT. The chain crosses the membrane as a helical span at residues 230-250; that stretch reads FIAPIGIGLSLFIAELTGVYF. At 251-274 the chain is on the extracellular side; that stretch reads TGGSVNPARSFGPSVVSGQFTGYH. Positions 256–258 match the NPA 2 motif; the sequence is NPA. Residues 275–295 form a helical membrane-spanning segment; it reads WIYWVGPILGAILASAFYKFI. The Cytoplasmic segment spans residues 296–454; the sequence is KMLEYETANP…ENLRDNTHNN (159 aa). Residues 343 to 454 are disordered; that stretch reads GASHVHENGN…ENLRDNTHNN (112 aa).

This sequence belongs to the MIP/aquaporin (TC 1.A.8) family.

The protein localises to the membrane. The catalysed reaction is H2O(in) = H2O(out). In terms of biological role, water channel required to facilitate the transport of water across membranes. Involved in conidiation. The polypeptide is Aquaporin-7 (Botryotinia fuckeliana (strain B05.10) (Noble rot fungus)).